The sequence spans 196 residues: ATP-dependent Clp protease proteolytic subunit (196 aa).

Ser-101 functions as the Nucleophile in the catalytic mechanism. His-126 is a catalytic residue.

The protein belongs to the peptidase S14 family. As to quaternary structure, component of the chloroplastic Clp protease core complex.

The protein localises to the plastid. It localises to the chloroplast stroma. The enzyme catalyses Hydrolysis of proteins to small peptides in the presence of ATP and magnesium. alpha-casein is the usual test substrate. In the absence of ATP, only oligopeptides shorter than five residues are hydrolyzed (such as succinyl-Leu-Tyr-|-NHMec, and Leu-Tyr-Leu-|-Tyr-Trp, in which cleavage of the -Tyr-|-Leu- and -Tyr-|-Trp bonds also occurs).. Cleaves peptides in various proteins in a process that requires ATP hydrolysis. Has a chymotrypsin-like activity. Plays a major role in the degradation of misfolded proteins. The protein is ATP-dependent Clp protease proteolytic subunit of Lotus japonicus (Lotus corniculatus var. japonicus).